Reading from the N-terminus, the 386-residue chain is S-adenosylmethionine synthase (386 aa).

Histidine 16 contributes to the ATP binding site. Aspartate 18 contributes to the Mg(2+) binding site. Glutamate 44 lines the K(+) pocket. Positions 57 and 100 each coordinate L-methionine. Residues 100 to 110 are flexible loop; the sequence is QSRDITQGVDR. ATP is bound by residues 165-167, aspartate 240, 246-247, alanine 263, and lysine 267; these read DAK and RK. Aspartate 240 provides a ligand contact to L-methionine. Lysine 271 is a binding site for L-methionine.

The protein belongs to the AdoMet synthase family. Homotetramer; dimer of dimers. It depends on Mg(2+) as a cofactor. The cofactor is K(+).

The protein resides in the cytoplasm. It catalyses the reaction L-methionine + ATP + H2O = S-adenosyl-L-methionine + phosphate + diphosphate. The protein operates within amino-acid biosynthesis; S-adenosyl-L-methionine biosynthesis; S-adenosyl-L-methionine from L-methionine: step 1/1. Its function is as follows. Catalyzes the formation of S-adenosylmethionine (AdoMet) from methionine and ATP. The overall synthetic reaction is composed of two sequential steps, AdoMet formation and the subsequent tripolyphosphate hydrolysis which occurs prior to release of AdoMet from the enzyme. The polypeptide is S-adenosylmethionine synthase (Francisella tularensis subsp. tularensis (strain FSC 198)).